Here is a 520-residue protein sequence, read N- to C-terminus: Erythritol kinase (520 aa).

It belongs to the FGGY kinase family.

It carries out the reaction erythritol + ATP = D-erythritol 1-phosphate + ADP + H(+). Its pathway is carbohydrate metabolism; erythritol degradation. Functionally, catalyzes the phosphorylation of erythritol to D-erythritol-1-phosphate. This chain is Erythritol kinase, found in Brucella abortus (strain 2308).